The sequence spans 328 residues: Phenylalanine--tRNA ligase alpha subunit (328 aa).

E245 serves as a coordination point for Mg(2+).

The protein belongs to the class-II aminoacyl-tRNA synthetase family. Phe-tRNA synthetase alpha subunit type 1 subfamily. Tetramer of two alpha and two beta subunits. Requires Mg(2+) as cofactor.

Its subcellular location is the cytoplasm. It catalyses the reaction tRNA(Phe) + L-phenylalanine + ATP = L-phenylalanyl-tRNA(Phe) + AMP + diphosphate + H(+). This chain is Phenylalanine--tRNA ligase alpha subunit, found in Helicobacter pylori (strain G27).